Here is a 273-residue protein sequence, read N- to C-terminus: MVSKKTIEARKAYYNEDVVLSKEAHDFYHNLDKHGENHNLDKDNLKTIIFGSLDGIITIFAIVSGCVGAKITPTQVIIIGIGNLFANAISMGFSEYTSSTAQRDFMLAEKKREEWEIENCPSEEKQEMIDIYMNKYKFDSEDARNLVEITFRNKNFFLEHMMSEELGLIVTNEDKNECLKKGIIMFLSFAVFGIIPLSAYVAYTVFFGYTDYTTSFLVVFISTLTTLFILGLFKSQFTNQKPITCALYMVLNGMIAGMVPFLLGVVLKNNISE.

At 1 to 47 (MVSKKTIEARKAYYNEDVVLSKEAHDFYHNLDKHGENHNLDKDNLKT) the chain is on the cytoplasmic side. A helical transmembrane segment spans residues 48 to 68 (IIFGSLDGIITIFAIVSGCVG). At 69–75 (AKITPTQ) the chain is on the vacuolar side. A helical membrane pass occupies residues 76-96 (VIIIGIGNLFANAISMGFSEY). The Cytoplasmic portion of the chain corresponds to 97–181 (TSSTAQRDFM…NEDKNECLKK (85 aa)). Residues Glu113, Glu116, Glu124, Glu127, Met161, and Glu165 each contribute to the Fe cation site. Residues 182 to 202 (GIIMFLSFAVFGIIPLSAYVA) traverse the membrane as a helical segment. Over 203–212 (YTVFFGYTDY) the chain is Vacuolar. Residues 213-233 (TTSFLVVFISTLTTLFILGLF) traverse the membrane as a helical segment. The Cytoplasmic portion of the chain corresponds to 234 to 246 (KSQFTNQKPITCA). The chain crosses the membrane as a helical span at residues 247-267 (LYMVLNGMIAGMVPFLLGVVL). At 268–273 (KNNISE) the chain is on the vacuolar side.

Belongs to the CCC1 family. In terms of assembly, monomer.

It localises to the vacuole membrane. Its subcellular location is the endoplasmic reticulum membrane. The protein resides in the cytoplasmic vesicle membrane. It catalyses the reaction Fe(2+)(in) = Fe(2+)(out). In terms of biological role, vacuolar iron transporter involved in the transfer of iron ions from the cytosol to the vacuole for intracellular iron storage. Involved in detoxification of excess iron. The transport mechanism is not well defined and the role of protons is not clear. This is Vacuolar iron transporter from Plasmodium falciparum (isolate 3D7).